Reading from the N-terminus, the 118-residue chain is Fluoride-specific ion channel FluC 2 (118 aa).

A run of 4 helical transmembrane segments spans residues 1 to 21 (MIEA…RFAI), 33 to 53 (FPIA…YIIG), 55 to 75 (GVTT…FTTF), and 93 to 113 (TFLL…FLGM). Residues Gly-70 and Thr-73 each coordinate Na(+).

Belongs to the fluoride channel Fluc/FEX (TC 1.A.43) family.

The protein localises to the cell membrane. The catalysed reaction is fluoride(in) = fluoride(out). Na(+) is not transported, but it plays an essential structural role and its presence is essential for fluoride channel function. Fluoride-specific ion channel. Important for reducing fluoride concentration in the cell, thus reducing its toxicity. In Bacillus thuringiensis subsp. konkukian (strain 97-27), this protein is Fluoride-specific ion channel FluC 2.